Here is a 326-residue protein sequence, read N- to C-terminus: Small ribosomal subunit protein RACK1x (326 aa).

WD repeat units lie at residues 13–53 (AHTD…KSYG), 61–100 (GHSHFVEDVVLSSDGQFALSGSWDGELRLWDLATGETTRR), 103–142 (GHTKDVLSVAFSTDNRQIVSASRDRTIKLWNTLGECKYTI), 147–188 (GHKE…LRNS), 191–230 (GHSGYLNTVAVSPDGSLCASGGKDGVILLWDLAEGKKLYS), 232–270 (EAGSIIHSLCFSPNRYWLCAATENSIRIWDLESKSVVED), and 290–326 (NQKKVIYCTSLNWSADGSTLFSGYTDGVVRVWGIGRY).

This sequence belongs to the WD repeat G protein beta family. Ribosomal protein RACK1 subfamily. Homodimer and heterodimer with RACK1A or RACK1B. Interacts with GB1, MEKK1, MKK4, MKK5, MPK3 and MPK6, but not with GPA1 or MPK4. In terms of tissue distribution, widely expressed.

Minor component of the RACK1 regulatory proteins that play a role in multiple signal transduction pathways. Involved in multiple hormone responses and developmental processes. MAPK cascade scaffolding protein involved in the protease IV and ArgC signaling pathway but not the flg22 pathway. In Arabidopsis thaliana (Mouse-ear cress), this protein is Small ribosomal subunit protein RACK1x.